The primary structure comprises 312 residues: MRIAFLGTPAFAVAALDALERAGHALVTVVAQPDRPAGRGQALREPATKAWARARGVPVLQPEKVRDGTLAAALRALAPDALVVAAYGRILGKDLLTLAPHGALNVHGSLLPRWRGAAPIQWAVAEGERETGVTIMQMDEGLDTGDVLLQRALEIGEDDTSETLAPRLAALGGEALVEALRLLEAGALVPVRQDAAQATLARILEKEDGRIAWTRPARRISDRLRGFTPWPGAFTTLEGRTLKVLEARPGADVATPAGEPGEAEVVPGRGLAVACGGGSALLVTRVQLEGRPAQSALDLANGLRRKRFRLGT.

109 to 112 (SLLP) is a (6S)-5,6,7,8-tetrahydrofolate binding site.

This sequence belongs to the Fmt family.

The catalysed reaction is L-methionyl-tRNA(fMet) + (6R)-10-formyltetrahydrofolate = N-formyl-L-methionyl-tRNA(fMet) + (6S)-5,6,7,8-tetrahydrofolate + H(+). Attaches a formyl group to the free amino group of methionyl-tRNA(fMet). The formyl group appears to play a dual role in the initiator identity of N-formylmethionyl-tRNA by promoting its recognition by IF2 and preventing the misappropriation of this tRNA by the elongation apparatus. The polypeptide is Methionyl-tRNA formyltransferase (Anaeromyxobacter dehalogenans (strain 2CP-1 / ATCC BAA-258)).